A 37-amino-acid polypeptide reads, in one-letter code: Beta-2-microglobulin (37 aa).

The region spanning 11–37 (GKEDVLICHVSNFHPPDITITLLKNGE) is the Ig-like C1-type domain.

This sequence belongs to the beta-2-microglobulin family. Heterodimer of an alpha chain and a beta chain. Beta-2-microglobulin is the beta-chain of major histocompatibility complex class I molecules.

The protein localises to the secreted. Component of the class I major histocompatibility complex (MHC). Involved in the presentation of peptide antigens to the immune system. This chain is Beta-2-microglobulin (b2m), found in Oreochromis niloticus (Nile tilapia).